The following is a 1450-amino-acid chain: DNA-directed RNA polymerase RPB1 homolog (1450 aa).

The protein belongs to the RNA polymerase beta' chain family. Part of the viral DNA-directed RNA polymerase that consists of 8 polII-like subunits (RPB1, RPB2, RPB3, RPB5, RPB6, RPB7, RPB9, RPB10), a capping enzyme and a termination factor.

Its subcellular location is the virion. The catalysed reaction is RNA(n) + a ribonucleoside 5'-triphosphate = RNA(n+1) + diphosphate. Its function is as follows. Catalytic component of the DNA-directed RNA polymerase (RNAP) that catalyzes the transcription in the cytoplasm of viral DNA into RNA using the four ribonucleoside triphosphates as substrates. Forms the polymerase active center together with RPB2. Part of the core element with the central large cleft, the clamp element that moves to open and close the cleft and the jaws that are thought to grab the incoming DNA template. This chain is DNA-directed RNA polymerase RPB1 homolog, found in African swine fever virus (strain Badajoz 1971 Vero-adapted) (Ba71V).